A 265-amino-acid polypeptide reads, in one-letter code: Acyl-[acyl-carrier-protein]--UDP-N-acetylglucosamine O-acyltransferase (265 aa).

It belongs to the transferase hexapeptide repeat family. LpxA subfamily. In terms of assembly, homotrimer.

Its subcellular location is the cytoplasm. It carries out the reaction a (3R)-hydroxyacyl-[ACP] + UDP-N-acetyl-alpha-D-glucosamine = a UDP-3-O-[(3R)-3-hydroxyacyl]-N-acetyl-alpha-D-glucosamine + holo-[ACP]. The protein operates within glycolipid biosynthesis; lipid IV(A) biosynthesis; lipid IV(A) from (3R)-3-hydroxytetradecanoyl-[acyl-carrier-protein] and UDP-N-acetyl-alpha-D-glucosamine: step 1/6. Functionally, involved in the biosynthesis of lipid A, a phosphorylated glycolipid that anchors the lipopolysaccharide to the outer membrane of the cell. This Polynucleobacter asymbioticus (strain DSM 18221 / CIP 109841 / QLW-P1DMWA-1) (Polynucleobacter necessarius subsp. asymbioticus) protein is Acyl-[acyl-carrier-protein]--UDP-N-acetylglucosamine O-acyltransferase.